Reading from the N-terminus, the 676-residue chain is E3 ubiquitin-protein ligase ICP0 (676 aa).

The RING-type zinc-finger motif lies at 13 to 52 (CCICLDAITGAARALPCLHAFCLACIRRWLEGRPTCPLCK). Disordered stretches follow at residues 101–135 (DLTAADGEAPGAGGEAGAAGGSEAGGGAGGAEAAG), 266–486 (HLIP…PAPI), and 555–676 (AAIS…AWRQ). Residues 110-135 (PGAGGEAGAAGGSEAGGGAGGAEAAG) show a composition bias toward gly residues. Positions 286–303 (SDSDSEGSEDDSWSESEE) are enriched in acidic residues. Positions 304–314 (SSSGLSTSDLT) are enriched in low complexity. Over residues 315–328 (AIDDTETEPETDAE) the composition is skewed to acidic residues. Residues 351 to 361 (YVSTRGRQTPA) show a composition bias toward polar residues. Composition is skewed to low complexity over residues 375–388 (GRAAAVSAPPSSRS) and 397–411 (LPAAPRAAPAAQARA). Gly residues predominate over residues 422 to 439 (GAGLGVAAGETAGWGVGS). Residues 440–450 (EEGRGERRAKL) show a composition bias toward basic and acidic residues. Pro residues predominate over residues 474-484 (TPAPAPAPAPA). The span at 555-597 (AAISTRAPTPSPAGRAPAADPRRAGAPALAGAARAEAGRNGNP) shows a compositional bias: low complexity.

Post-translationally, auto-ubiquitinated. The strongly acidic region might serve as a transcriptional activation domain, possibly regulated through phosphorylation by casein kinase II.

It carries out the reaction S-ubiquitinyl-[E2 ubiquitin-conjugating enzyme]-L-cysteine + [acceptor protein]-L-lysine = [E2 ubiquitin-conjugating enzyme]-L-cysteine + N(6)-ubiquitinyl-[acceptor protein]-L-lysine.. Its function is as follows. Evades nuclear antiviral defenses triggered by dsDNA viruses. Acts during the initial stages of lytic infection and the reactivation of latent viral genome. Prevents the antiviral effect of nuclear bodies by degrading host PML and SP100. The sequence is that of E3 ubiquitin-protein ligase ICP0 (BICP0) from Bos taurus (Bovine).